The following is a 624-amino-acid chain: DNA mismatch repair protein MutL (624 aa).

The protein belongs to the DNA mismatch repair MutL/HexB family.

Functionally, this protein is involved in the repair of mismatches in DNA. It is required for dam-dependent methyl-directed DNA mismatch repair. May act as a 'molecular matchmaker', a protein that promotes the formation of a stable complex between two or more DNA-binding proteins in an ATP-dependent manner without itself being part of a final effector complex. In Xanthomonas campestris pv. campestris (strain B100), this protein is DNA mismatch repair protein MutL.